The following is a 689-amino-acid chain: tRNA 5-methylaminomethyl-2-thiouridine biosynthesis bifunctional protein MnmC (689 aa).

The segment at 1-245 (MNQRPIQTAT…KREMLTGTLP (245 aa)) is tRNA (mnm(5)s(2)U34)-methyltransferase. The FAD-dependent cmnm(5)s(2)U34 oxidoreductase stretch occupies residues 270–689 (IGGGIVSALT…RSPATQESSR (420 aa)).

The protein in the N-terminal section; belongs to the methyltransferase superfamily. tRNA (mnm(5)s(2)U34)-methyltransferase family. This sequence in the C-terminal section; belongs to the DAO family. It depends on FAD as a cofactor.

The protein localises to the cytoplasm. The enzyme catalyses 5-aminomethyl-2-thiouridine(34) in tRNA + S-adenosyl-L-methionine = 5-methylaminomethyl-2-thiouridine(34) in tRNA + S-adenosyl-L-homocysteine + H(+). Functionally, catalyzes the last two steps in the biosynthesis of 5-methylaminomethyl-2-thiouridine (mnm(5)s(2)U) at the wobble position (U34) in tRNA. Catalyzes the FAD-dependent demodification of cmnm(5)s(2)U34 to nm(5)s(2)U34, followed by the transfer of a methyl group from S-adenosyl-L-methionine to nm(5)s(2)U34, to form mnm(5)s(2)U34. The polypeptide is tRNA 5-methylaminomethyl-2-thiouridine biosynthesis bifunctional protein MnmC (Yersinia pseudotuberculosis serotype O:1b (strain IP 31758)).